We begin with the raw amino-acid sequence, 206 residues long: Large ribosomal subunit protein uL3 (206 aa).

This sequence belongs to the universal ribosomal protein uL3 family. Part of the 50S ribosomal subunit. Forms a cluster with proteins L14 and L19.

Functionally, one of the primary rRNA binding proteins, it binds directly near the 3'-end of the 23S rRNA, where it nucleates assembly of the 50S subunit. In Thermus thermophilus (strain ATCC BAA-163 / DSM 7039 / HB27), this protein is Large ribosomal subunit protein uL3.